Consider the following 328-residue polypeptide: Bcl-2/adenovirus E1B 19 kDa-interacting protein 2-like protein (328 aa).

Over residues 1–22 (MKLGELELREEWQDEEFPRLLP) the composition is skewed to basic and acidic residues. The interval 1-116 (MKLGELELRE…DSGHEFEWED (116 aa)) is disordered. The segment covering 36 to 45 (RGSQAGTPSS) has biased composition (polar residues). Residues 76–89 (ASPTRSASSSSAGS) are compositionally biased toward low complexity. Acidic residues predominate over residues 92-105 (LEVDELETPSDSEQ). Residues 107 to 116 (DSGHEFEWED) are compositionally biased toward basic and acidic residues. The CRAL-TRIO domain maps to 162–323 (DMTIIEPYKK…VVRQLDRDLH (162 aa)).

In terms of assembly, homodimer. Interacts with BCL2, ARHGAP1, MIF and GFER.

Functionally, may be a bridge molecule between BCL2 and ARHGAP1/CDC42 in promoting cell death. This is Bcl-2/adenovirus E1B 19 kDa-interacting protein 2-like protein (Bnipl) from Mus musculus (Mouse).